The chain runs to 68 residues: Protein transport protein Sec61 subunit gamma (68 aa).

Residues 1–32 (MDQVMQFVEPSRQFVKDSIRLVKRCTKPDRKE) lie on the Cytoplasmic side of the membrane. Residues 33–61 (FQKVAMATAIGFAIMGFIGFFVKLIHIPI) form a helical membrane-spanning segment. Topologically, residues 62–68 (NNIIVGG) are extracellular.

The protein belongs to the SecE/SEC61-gamma family. The SEC61 channel-forming translocon complex consists of channel-forming core components SEC61A1, SEC61B and SEC61G and different auxiliary components such as SEC62 and SEC63. The SEC61 channel associates with the multi-pass translocon (MPT) complex.

The protein localises to the endoplasmic reticulum membrane. Component of SEC61 channel-forming translocon complex that mediates transport of signal peptide-containing precursor polypeptides across the endoplasmic reticulum (ER). Forms a ribosome receptor and a gated pore in the ER membrane, both functions required for cotranslational translocation of nascent polypeptides. The SEC61 channel is also involved in ER membrane insertion of transmembrane proteins: it mediates membrane insertion of the first few transmembrane segments of proteins, while insertion of subsequent transmembrane regions of multi-pass membrane proteins is mediated by the multi-pass translocon (MPT) complex. The protein is Protein transport protein Sec61 subunit gamma (sec61g) of Harpagifer antarcticus (Antarctic spiny plunderfish).